The following is a 251-amino-acid chain: Triosephosphate isomerase (251 aa).

Residue 12–14 participates in substrate binding; it reads NWK. H98 acts as the Electrophile in catalysis. The active-site Proton acceptor is the E168. Residues G174, S213, and 234-235 each bind substrate; that span reads GG.

Belongs to the triosephosphate isomerase family. Homodimer.

Its subcellular location is the cytoplasm. It catalyses the reaction D-glyceraldehyde 3-phosphate = dihydroxyacetone phosphate. The protein operates within carbohydrate biosynthesis; gluconeogenesis. It functions in the pathway carbohydrate degradation; glycolysis; D-glyceraldehyde 3-phosphate from glycerone phosphate: step 1/1. Its function is as follows. Involved in the gluconeogenesis. Catalyzes stereospecifically the conversion of dihydroxyacetone phosphate (DHAP) to D-glyceraldehyde-3-phosphate (G3P). In Bradyrhizobium diazoefficiens (strain JCM 10833 / BCRC 13528 / IAM 13628 / NBRC 14792 / USDA 110), this protein is Triosephosphate isomerase.